Here is a 346-residue protein sequence, read N- to C-terminus: Phosphoribosylformylglycinamidine cyclo-ligase (346 aa).

This sequence belongs to the AIR synthase family.

Its subcellular location is the cytoplasm. The catalysed reaction is 2-formamido-N(1)-(5-O-phospho-beta-D-ribosyl)acetamidine + ATP = 5-amino-1-(5-phospho-beta-D-ribosyl)imidazole + ADP + phosphate + H(+). It participates in purine metabolism; IMP biosynthesis via de novo pathway; 5-amino-1-(5-phospho-D-ribosyl)imidazole from N(2)-formyl-N(1)-(5-phospho-D-ribosyl)glycinamide: step 2/2. This chain is Phosphoribosylformylglycinamidine cyclo-ligase, found in Geobacillus sp. (strain WCH70).